Here is a 294-residue protein sequence, read N- to C-terminus: Cytidine deaminase (294 aa).

CMP/dCMP-type deaminase domains are found at residues 48 to 168 and 186 to 294; these read DEDA…FGPK and LTGD…VLLG. 89–91 provides a ligand contact to substrate; the sequence is NME. His-102 lines the Zn(2+) pocket. Glu-104 serves as the catalytic Proton donor. 2 residues coordinate Zn(2+): Cys-129 and Cys-132.

The protein belongs to the cytidine and deoxycytidylate deaminase family. Homodimer. The cofactor is Zn(2+).

The catalysed reaction is cytidine + H2O + H(+) = uridine + NH4(+). The enzyme catalyses 2'-deoxycytidine + H2O + H(+) = 2'-deoxyuridine + NH4(+). This enzyme scavenges exogenous and endogenous cytidine and 2'-deoxycytidine for UMP synthesis. The protein is Cytidine deaminase of Salmonella enteritidis PT4 (strain P125109).